Consider the following 179-residue polypeptide: MKLILDFFPILLFFGAYKLADIYTATGVLMAATVLQMGIIYAMERKLQAMQKATLVLILLFGTLTLVLHDDRFIKWKPTVLYGAMAIALAVALWALKKNFLKMLLGSQLQLPDRIWGRLNVAWIGYCLFMAAINGYVAAYFTTEAWVNFKLWGYVFPIVFLVAQGLYISPHLKNDEPSV.

5 helical membrane-spanning segments follow: residues Thr24 to Glu44, Ala49 to His69, Trp76 to Leu96, Val121 to Phe141, and Leu151 to His171.

It belongs to the YciB family.

The protein resides in the cell inner membrane. Functionally, plays a role in cell envelope biogenesis, maintenance of cell envelope integrity and membrane homeostasis. This Variovorax paradoxus (strain S110) protein is Inner membrane-spanning protein YciB.